We begin with the raw amino-acid sequence, 468 residues long: Phosphomethylpyrimidine synthase (468 aa).

Substrate is bound by residues Asn82, Met111, Tyr141, His177, 197 to 199 (SRG), 238 to 241 (DSLR), and Glu277. His281 serves as a coordination point for Zn(2+). Tyr304 contacts substrate. His345 lines the Zn(2+) pocket. [4Fe-4S] cluster-binding residues include Cys425, Cys428, and Cys433.

It belongs to the ThiC family. It depends on [4Fe-4S] cluster as a cofactor.

It carries out the reaction 5-amino-1-(5-phospho-beta-D-ribosyl)imidazole + S-adenosyl-L-methionine = 4-amino-2-methyl-5-(phosphooxymethyl)pyrimidine + CO + 5'-deoxyadenosine + formate + L-methionine + 3 H(+). It participates in cofactor biosynthesis; thiamine diphosphate biosynthesis. Functionally, catalyzes the synthesis of the hydroxymethylpyrimidine phosphate (HMP-P) moiety of thiamine from aminoimidazole ribotide (AIR) in a radical S-adenosyl-L-methionine (SAM)-dependent reaction. This chain is Phosphomethylpyrimidine synthase, found in Prochlorococcus marinus (strain SARG / CCMP1375 / SS120).